A 117-amino-acid polypeptide reads, in one-letter code: Large ribosomal subunit protein bL19 (117 aa).

This sequence belongs to the bacterial ribosomal protein bL19 family.

This protein is located at the 30S-50S ribosomal subunit interface and may play a role in the structure and function of the aminoacyl-tRNA binding site. The protein is Large ribosomal subunit protein bL19 of Bacteroides thetaiotaomicron (strain ATCC 29148 / DSM 2079 / JCM 5827 / CCUG 10774 / NCTC 10582 / VPI-5482 / E50).